Here is a 270-residue protein sequence, read N- to C-terminus: Putative phosphoenolpyruvate synthase regulatory protein (270 aa).

150–157 (GVSRCGKT) lines the ADP pocket.

The protein belongs to the pyruvate, phosphate/water dikinase regulatory protein family. PSRP subfamily.

The enzyme catalyses [pyruvate, water dikinase] + ADP = [pyruvate, water dikinase]-phosphate + AMP + H(+). It catalyses the reaction [pyruvate, water dikinase]-phosphate + phosphate + H(+) = [pyruvate, water dikinase] + diphosphate. In terms of biological role, bifunctional serine/threonine kinase and phosphorylase involved in the regulation of the phosphoenolpyruvate synthase (PEPS) by catalyzing its phosphorylation/dephosphorylation. The polypeptide is Putative phosphoenolpyruvate synthase regulatory protein (Shewanella amazonensis (strain ATCC BAA-1098 / SB2B)).